The primary structure comprises 476 residues: DnaJ protein P58IPK homolog A (476 aa).

An N-terminal signal peptide occupies residues 1-28 (MVAMARWPWRVLLPLLLLHSSPVFFVFA). TPR repeat units lie at residues 36 to 69 (PSTLFKRALEMMNLRKYDGSLGLLNAVLEVEPNH), 70 to 103 (SEAYRQRASVLRHKCRYKEAEGDYSKYLELKPGS), 116 to 150 (AQNALESAYGQFESHDFSKVLDYINKIVLVFSPDC), 152 to 184 (KAKLLKAKALLALKDYSTVISETGFILKEDEDN), 185 to 218 (LDALLLRGRAYYYLADHDVASRHYQKGLRLDPEH), 231 to 264 (LVKKTKSAEDNAAKGKLRVSAEDYKASLAMDPDH), 269 to 302 (VHLYLGLCKVLVKLGRGKEAISSCTEALNIDGEL), and 304 to 336 (DALTQRGEAKLLTEDWEGAVQDLKEAAQKSPQD). The J domain maps to 357 to 423 (DWYKILGISK…DKRVRYDRGE (67 aa)).

Interacts with BIP1.

It is found in the endoplasmic reticulum lumen. In terms of biological role, may play a role in protein folding in the endoplasmic reticulum. This Oryza sativa subsp. japonica (Rice) protein is DnaJ protein P58IPK homolog A.